Here is a 310-residue protein sequence, read N- to C-terminus: Prohibitin-2 (310 aa).

The helical; Signal-anchor for type II membrane protein transmembrane segment at 38–58 (FAGLGGLLLLGGGALFINNAL) threads the bilayer. Residues 130 to 144 (DVVQLPTIYRTLGQD) form an interaction with ATG8 region. An AIM motif is present at residues 138–141 (YRTL). Positions 212–253 (NAVEAKQIAQQDAQRAAFVVDKARQEKQGMVVRAQGEAKSAE) form a coiled coil.

The protein belongs to the prohibitin family. The mitochondrial prohibitin complex consists of two subunits (PHB1 and PHB2). The subunits assemble into a membrane-associated ring-shaped supercomplex of approximately 1 mDa. The mitochondrial prohibitin complex interacts with the m-AAA protease, a heterohexamer composed of YTA12/RCA1 and YTA10/AFG3. The mitochondrial prohibitin complex interacts with ATG8 and the interaction may support mitophagosome assembly. The N-terminus is blocked.

It localises to the mitochondrion inner membrane. Functionally, prohibitin probably acts as a holdase/unfoldase for the stabilization of newly synthesized mitochondrial proteins. Involved in mitophagy; may act as an adapter for ATG8 that supports mitophagosome assembly. Negatively regulates the proteolytic processing of ATG32 via the i-AAA protease. Acts as a negative regulator of the m-AAA protease. This is Prohibitin-2 (PHB2) from Saccharomyces cerevisiae (strain ATCC 204508 / S288c) (Baker's yeast).